Reading from the N-terminus, the 294-residue chain is MQDYLVRAVASDGNFRIFSARTTNTVEEARTRHNSWPVATAALGRTMTAALLMGANLKGEDTLSIRVLGDGPLGAIIVTSNAKGEVRGYVQEPQIHLPSTPEGKLAVGAAVGKGHLHITKDLGLKEPFTGSVELVSGEIAEDFAHYLTTSEQTPSAVSLGVLVDTDNSVVAAGGLILQLLPGAGEEVLEILEQNLRQLPHLSSLIKNGETPEDIIKRVTKGIEMKFLESNPVGFSCQCSRERLENLLVGIGKDEVTSMLQEQGAAEINCHFCAENYHFDKKDLQRILKRIEEKD.

Cystine bridges form between Cys236-Cys238 and Cys269-Cys272.

This sequence belongs to the HSP33 family. In terms of processing, under oxidizing conditions two disulfide bonds are formed involving the reactive cysteines. Under reducing conditions zinc is bound to the reactive cysteines and the protein is inactive.

It is found in the cytoplasm. Functionally, redox regulated molecular chaperone. Protects both thermally unfolding and oxidatively damaged proteins from irreversible aggregation. Plays an important role in the bacterial defense system toward oxidative stress. The polypeptide is 33 kDa chaperonin (Desulforamulus reducens (strain ATCC BAA-1160 / DSM 100696 / MI-1) (Desulfotomaculum reducens)).